A 496-amino-acid polypeptide reads, in one-letter code: Transmembrane transporter swnT (496 aa).

5 helical membrane passes run 40 to 60 (LSAI…PLIL), 72 to 92 (VFWG…TLAE), 124 to 144 (AMIS…SVPL), 162 to 182 (WMGF…ACFE), and 191 to 211 (AFLL…FAMA). Residue Asn225 is glycosylated (N-linked (GlcNAc...) asparagine). 6 consecutive transmembrane segments (helical) span residues 270–290 (LLWT…AVLV), 314–334 (AAAI…VWSI), 368–388 (PIWS…LYLA), 396–416 (LIAT…VLVL), 434–454 (GLVA…FYCF), and 467–487 (YVSG…ILYA).

It belongs to the amino acid-polyamine-organocation (APC) superfamily. Amino acid/choline transporter (ACT) (TC 2.A.3.4) family.

It is found in the membrane. In terms of biological role, transmembrane transporter; part of the gene cluster that mediates the biosynthesis of swainsonine, a cytotoxic fungal alkaloid and a potential cancer therapy drug. Does not mediate the secretion of SW and the exact role of swnT in SW biosynthesis remains to be determined. The sequence is that of Transmembrane transporter swnT from Metarhizium robertsii (strain ARSEF 23 / ATCC MYA-3075) (Metarhizium anisopliae (strain ARSEF 23)).